The primary structure comprises 186 residues: Elongation factor P (186 aa).

This sequence belongs to the elongation factor P family.

It localises to the cytoplasm. It functions in the pathway protein biosynthesis; polypeptide chain elongation. Involved in peptide bond synthesis. Stimulates efficient translation and peptide-bond synthesis on native or reconstituted 70S ribosomes in vitro. Probably functions indirectly by altering the affinity of the ribosome for aminoacyl-tRNA, thus increasing their reactivity as acceptors for peptidyl transferase. This is Elongation factor P from Coprothermobacter proteolyticus (strain ATCC 35245 / DSM 5265 / OCM 4 / BT).